Here is a 105-residue protein sequence, read N- to C-terminus: ATP-dependent Clp protease adapter protein ClpS (105 aa).

This sequence belongs to the ClpS family. Binds to the N-terminal domain of the chaperone ClpA.

Its function is as follows. Involved in the modulation of the specificity of the ClpAP-mediated ATP-dependent protein degradation. The sequence is that of ATP-dependent Clp protease adapter protein ClpS from Aeromonas salmonicida (strain A449).